Reading from the N-terminus, the 398-residue chain is Enoyl-[acyl-carrier-protein] reductase [NADH] (398 aa).

Residues 48 to 53 (GASTGY), 74 to 75 (FE), 111 to 112 (DG), and 139 to 140 (LA) each bind NAD(+). A substrate-binding site is contributed by tyrosine 225. Tyrosine 235 acts as the Proton donor in catalysis. NAD(+) contacts are provided by residues lysine 244 and 273–275 (VVT).

It belongs to the TER reductase family. Monomer.

It carries out the reaction a 2,3-saturated acyl-[ACP] + NAD(+) = a (2E)-enoyl-[ACP] + NADH + H(+). Its pathway is lipid metabolism; fatty acid biosynthesis. Functionally, involved in the final reduction of the elongation cycle of fatty acid synthesis (FAS II). Catalyzes the reduction of a carbon-carbon double bond in an enoyl moiety that is covalently linked to an acyl carrier protein (ACP). The chain is Enoyl-[acyl-carrier-protein] reductase [NADH] from Variovorax paradoxus (strain S110).